The primary structure comprises 597 residues: NADPH-dependent diflavin oxidoreductase 1 (597 aa).

The region spanning Leu-6–Trp-150 is the Flavodoxin-like domain. FMN contacts are provided by residues Ser-12–Ala-17, Ala-59–Gly-62, Leu-97–Asn-106, and Asp-132. The 241-residue stretch at Leu-206 to Pro-446 folds into the FAD-binding FR-type domain. FAD-binding positions include Arg-350, Arg-382–Ser-385, and Gly-416–Ser-419. Residues Thr-460, Ser-515 to Arg-516, Lys-521 to Gln-525, and Asp-558 contribute to the NADP(+) site. Trp-596 lines the FAD pocket.

This sequence belongs to the NADPH-dependent diflavin oxidoreductase NDOR1 family. The protein in the N-terminal section; belongs to the flavodoxin family. It in the C-terminal section; belongs to the flavoprotein pyridine nucleotide cytochrome reductase family. In terms of assembly, interacts with CIAPIN1; as part of the cytosolic iron-sulfur (Fe-S) protein assembly (CIA) machinery. Interacts with DCPS. FAD serves as cofactor. The cofactor is FMN.

It is found in the cytoplasm. The protein localises to the perinuclear region. The enzyme catalyses 2 oxidized [2Fe-2S]-[protein] + NADPH = 2 reduced [2Fe-2S]-[protein] + NADP(+) + H(+). NADPH-dependent reductase which is a central component of the cytosolic iron-sulfur (Fe-S) protein assembly (CIA) machinery. Transfers electrons from NADPH via its FAD and FMN prosthetic groups to the [2Fe-2S] cluster of CIAPIN1, another key component of the CIA machinery. In turn, this reduced cluster provides electrons for assembly of cytosolic iron-sulfur cluster proteins. It can also reduce the [2Fe-2S] cluster of CISD1 and activate this protein implicated in Fe/S cluster repair. In vitro can fully activate methionine synthase/MTR in the presence of soluble cytochrome b5/CYB5A. The protein is NADPH-dependent diflavin oxidoreductase 1 of Bos taurus (Bovine).